The following is a 108-amino-acid chain: MTVITTLGLFIITAIAEIVGCYLPYLWLKKGASAWVLLPAAISLALFAWLLTLHPTAAGRVYAAYGGVYVTIAIVWLWGVDGIQPHRWDLAGVVLMLAGMAVIMFAPR.

4 helical membrane passes run 3–23, 31–51, 63–83, and 87–107; these read VITTLGLFIITAIAEIVGCYL, GASAWVLLPAAISLALFAWLL, AAYGGVYVTIAIVWLWGVDGI, and RWDLAGVVLMLAGMAVIMFAP.

It belongs to the UPF0060 family.

It localises to the cell inner membrane. In Shewanella sp. (strain W3-18-1), this protein is UPF0060 membrane protein Sputw3181_1172.